Here is a 330-residue protein sequence, read N- to C-terminus: MTLIVTGAAGFIGANIVKALNERGESRIIAVDNLTRADKFRNLVDCEIDDYLDKTEFVERFARGDFGKVRAVFHEGACSDTMETDGRYMMDNNFRYSRAVLDACLAQGAQFLYASSAAIYGGSTRFVEEREVEAPLNVYGYSKFLFDQVIRRVLPSARSQIAGFRYFNVYGPRETHKGRMASVAFHNFNQFRAEGKVKLFGEYNGYAPGEQTRDFVSVEDVAKVNLFFFDHPEKSGIFNLGTGRAQPFNDIASTVVNTLRALDNLPPLTLAQQVEQGLIEYVAFPDALRGKYQCFTQADQTKLRAAGYDAPFLTVQEGVDRYVRWLSGQV.

NADP(+) is bound by residues phenylalanine 11 to isoleucine 12, aspartate 32 to asparagine 33, lysine 39, lysine 54, glutamate 75 to serine 79, and asparagine 92. Residue tyrosine 139 is the Proton acceptor of the active site. NADP(+) is bound at residue lysine 143. A substrate-binding site is contributed by asparagine 168. Valine 169 and lysine 177 together coordinate NADP(+). Lysine 177 acts as the Proton acceptor in catalysis. Substrate is bound by residues arginine 179, histidine 186, phenylalanine 200–tyrosine 203, arginine 213, and tyrosine 292.

This sequence belongs to the NAD(P)-dependent epimerase/dehydratase family. HldD subfamily. Homopentamer. NADP(+) serves as cofactor.

It carries out the reaction ADP-D-glycero-beta-D-manno-heptose = ADP-L-glycero-beta-D-manno-heptose. It participates in nucleotide-sugar biosynthesis; ADP-L-glycero-beta-D-manno-heptose biosynthesis; ADP-L-glycero-beta-D-manno-heptose from D-glycero-beta-D-manno-heptose 7-phosphate: step 4/4. Its function is as follows. Catalyzes the interconversion between ADP-D-glycero-beta-D-manno-heptose and ADP-L-glycero-beta-D-manno-heptose via an epimerization at carbon 6 of the heptose. The protein is ADP-L-glycero-D-manno-heptose-6-epimerase of Burkholderia vietnamiensis (strain G4 / LMG 22486) (Burkholderia cepacia (strain R1808)).